We begin with the raw amino-acid sequence, 231 residues long: uncharacterized protein (231 aa).

Residue 10-34 (VVTGAGSGIGEAIATLLHEEGAKVV) coordinates NADP(+). A substrate-binding site is contributed by Ser-140. Catalysis depends on Tyr-153, which acts as the Proton acceptor.

Belongs to the short-chain dehydrogenases/reductases (SDR) family.

This is an uncharacterized protein from Staphylococcus aureus (strain MW2).